Reading from the N-terminus, the 346-residue chain is PPE family protein PPE17 (346 aa).

Positions Phe-6–Ala-159 are PPE.

This sequence belongs to the mycobacterial PPE family. In terms of assembly, interacts with LRR motifs 15-20 of host Toll-like receptor 2 (TLR2).

Its subcellular location is the secreted. It localises to the cell wall. It is found in the cell surface. Its function is as follows. Induces pro-inflammatory responses. Induces host TLR1/2 heterodimerization, which causes an increased recruitment of IRAK1, MYD88, and protein kinase C epsilon (PRKCE) to the downstream TLR-signaling complex that translocates PRKCE into the nucleus in an IRAK1-dependent manner. PRKCE-mediated phosphorylation allowed the nuclear IRAK3 to be exported to the cytoplasm, leading to increased activation of ERK1/2, stabilization of MAPK phosphatase 1 (MKP1), and induction of TNF-alpha with concomitant down-regulation of MAP kinase p38. Functionally, during M.tuberculosis and HIV-1 co-infection, can stimulate transcription from the long terminal repeat (LTR) of HIV-1 in monocyte/macrophage cells. Interaction with human TLR2 activates the NF-kappa-B transcription factor, which binds to the promoter region of the HIV-1 and induces HIV-1 gene expression. This Mycobacterium tuberculosis (strain ATCC 25618 / H37Rv) protein is PPE family protein PPE17 (PPE17).